We begin with the raw amino-acid sequence, 164 residues long: MASKQERLTDLIVPVVESLGCELWGLEYLTQGRYTTLRIFIDGPQGVSLDDCERVSRQISAVLDVEDPIDGEYTLEVSSPGLDRPLYTEAQYARYVGETVNLRLRIAVEGRRRFKGVISAIEEGALLLQFDNQTVRLPIETIDKGNLVPRYDDILREHAAGLDE.

Belongs to the RimP family.

It is found in the cytoplasm. Required for maturation of 30S ribosomal subunits. This Cellvibrio japonicus (strain Ueda107) (Pseudomonas fluorescens subsp. cellulosa) protein is Ribosome maturation factor RimP.